Here is a 497-residue protein sequence, read N- to C-terminus: L-carnitine dehydrogenase/betainyl-CoA thioesterase (497 aa).

Residues 1-335 (MSFITKAACV…AKLWANARKP (335 aa)) are L-carnitine dehydrogenase. 11-16 (GGGVIG) lines the NAD(+) pocket. An important for dehydrogenase activity region spans residues 330–335 (ANARKP). The segment at 336–497 (EADLGDVKPL…AGRFVGQKRA (162 aa)) is betainyl-CoA thioesterase.

The protein in the N-terminal section; belongs to the 3-hydroxyacyl-CoA dehydrogenase family. L-carnitine dehydrogenase subfamily. It in the C-terminal section; belongs to the betainyl-CoA thioesterase family. Homodimer.

The protein localises to the cytoplasm. The enzyme catalyses carnitine + NAD(+) = 3-dehydrocarnitine + NADH + H(+). The catalysed reaction is N,N,N-trimethylglycyl-CoA + H2O = glycine betaine + CoA + H(+). Its pathway is amine and polyamine metabolism; carnitine metabolism. In terms of biological role, catalyzes the NAD(+)-dependent oxidation of L-carnitine to 3-dehydrocarnitine. Probably also catalyzes the cleavage of betainyl-CoA (N,N,N-trimethylglycyl-CoA) into glycine betaine and coenzyme A. Despite a high similarity to 3-hydroxyacyl-CoA dehydrogenases, cannot dehydrogenate 3-hydroxybutylate and 3-hydroxybutyl-CoA. Is probably involved in a L-carnitine degradation pathway that allows Rhizobium sp. YS-240 to grow on L-carnitine as the sole source of carbon and nitrogen. In Rhizobium sp, this protein is L-carnitine dehydrogenase/betainyl-CoA thioesterase.